A 160-amino-acid chain; its full sequence is SsrA-binding protein (160 aa).

Positions 131-160 (KKEYDKRDTEKARDSDREIQRAIRSKGKED) are disordered.

It belongs to the SmpB family.

The protein resides in the cytoplasm. In terms of biological role, required for rescue of stalled ribosomes mediated by trans-translation. Binds to transfer-messenger RNA (tmRNA), required for stable association of tmRNA with ribosomes. tmRNA and SmpB together mimic tRNA shape, replacing the anticodon stem-loop with SmpB. tmRNA is encoded by the ssrA gene; the 2 termini fold to resemble tRNA(Ala) and it encodes a 'tag peptide', a short internal open reading frame. During trans-translation Ala-aminoacylated tmRNA acts like a tRNA, entering the A-site of stalled ribosomes, displacing the stalled mRNA. The ribosome then switches to translate the ORF on the tmRNA; the nascent peptide is terminated with the 'tag peptide' encoded by the tmRNA and targeted for degradation. The ribosome is freed to recommence translation, which seems to be the essential function of trans-translation. This Azotobacter vinelandii (strain DJ / ATCC BAA-1303) protein is SsrA-binding protein.